The sequence spans 138 residues: Class I hydrophobin 1 (138 aa).

Positions 1 to 19 are cleaved as a signal peptide; sequence MRFSAATVSALAMALTVAA. 4 disulfide bridges follow: C45/C113, C53/C107, C54/C91, and C114/C131.

Belongs to the fungal hydrophobin family. As to quaternary structure, interacts with the lipid droplet coating protein Cap20.

The protein localises to the secreted. It is found in the lipid droplet. Functionally, aerial growth, conidiation, and dispersal of filamentous fungi in the environment rely upon a capability of their secreting small amphipathic proteins called hydrophobins (HPBs) with low sequence identity. Class I can self-assemble into an outermost layer of rodlet bundles on aerial cell surfaces, conferring cellular hydrophobicity that supports fungal growth, development and dispersal; whereas Class II form highly ordered films at water-air interfaces through intermolecular interactions but contribute nothing to the rodlet structure. Hydr1 is a class I hydrophobin involved in spore germination, appressorium formation, but not in the formation of the rodlet layer of conidia. Responsible for the full virulence on rubber tree leaves. This Colletotrichum siamense (Anthracnose fungus) protein is Class I hydrophobin 1.